The following is a 154-amino-acid chain: Ribonuclease H (154 aa).

The RNase H type-1 domain occupies 1–142 (MTKQVEIFTD…CDELAREGAN (142 aa)). Asp10, Glu48, Asp70, and Asp134 together coordinate Mg(2+).

Belongs to the RNase H family. As to quaternary structure, monomer. Mg(2+) is required as a cofactor.

Its subcellular location is the cytoplasm. The catalysed reaction is Endonucleolytic cleavage to 5'-phosphomonoester.. In terms of biological role, endonuclease that specifically degrades the RNA of RNA-DNA hybrids. The sequence is that of Ribonuclease H from Yersinia enterocolitica serotype O:8 / biotype 1B (strain NCTC 13174 / 8081).